The following is a 310-amino-acid chain: MSIRERHLSHGAPSRIRTTVLAYLALTKPRVIELLLVTAIPAMLLADRGSVDPLLILNTLIGGMLAAAGANTLNCVADADIDKKMKRTARRPLARDTVPTRNALIFGLVLSVGSFFWLWGTSNLLSGLLAVATIAFYVFVYTLLLKRRTSQNVVWGGAAGCMPVMIGWSAVTGTIQWPALVMFAIIFFWTPPHTWALAMRYKDDYKAAGVPMLPAVATERQVTRQILIYTWLTVLTTLALALATGWLYASVAVLAGTWFLVMAHQLYNGVKRGEPVKPLRLFLQSNNYLAVVFAALAVDSVLALPTLLGS.

The next 8 membrane-spanning stretches (helical) occupy residues 31–51 (VIEL…RGSV), 53–73 (PLLI…ANTL), 102–122 (NALI…WGTS), 124–144 (LLSG…YTLL), 149–169 (TSQN…IGWS), 170–190 (AVTG…FFWT), 242–262 (LATG…FLVM), and 289–309 (LAVV…TLLG).

This sequence belongs to the UbiA prenyltransferase family. Protoheme IX farnesyltransferase subfamily.

Its subcellular location is the cell membrane. It catalyses the reaction heme b + (2E,6E)-farnesyl diphosphate + H2O = Fe(II)-heme o + diphosphate. The protein operates within porphyrin-containing compound metabolism; heme O biosynthesis; heme O from protoheme: step 1/1. Its function is as follows. Converts heme B (protoheme IX) to heme O by substitution of the vinyl group on carbon 2 of heme B porphyrin ring with a hydroxyethyl farnesyl side group. This chain is Protoheme IX farnesyltransferase, found in Mycobacterium sp. (strain JLS).